Consider the following 168-residue polypeptide: Ubiquitin-conjugating enzyme E2 7 (168 aa).

The disordered stretch occupies residues 1–21; it reads MATAPARRASSSRSSSEISRT. The UBC core domain occupies 6–166; the sequence is ARRASSSRSS…VRRAVRKSQE (161 aa). Cysteine 92 acts as the Glycyl thioester intermediate in catalysis.

This sequence belongs to the ubiquitin-conjugating enzyme family.

The catalysed reaction is S-ubiquitinyl-[E1 ubiquitin-activating enzyme]-L-cysteine + [E2 ubiquitin-conjugating enzyme]-L-cysteine = [E1 ubiquitin-activating enzyme]-L-cysteine + S-ubiquitinyl-[E2 ubiquitin-conjugating enzyme]-L-cysteine.. It functions in the pathway protein modification; protein ubiquitination. Functionally, catalyzes the covalent attachment of ubiquitin to other proteins so as to signal them for selective protein degradation. Involved in the formation of multiubiquitin chains. This chain is Ubiquitin-conjugating enzyme E2 7 (UBC7), found in Triticum aestivum (Wheat).